A 200-amino-acid polypeptide reads, in one-letter code: MGHVTDIRSNSQGFNLTDSVYERLLSERIIFLGSEVNDNIANRLCAQILLLAAEDAFKDISLYINSPGGSISAGMAIYDTMVLAPCDIATYAMGMAASMGEFLLAAGTRGKRYALPHARILMHQPLGGVTGSAADIAIQAEQFAVIKKEMFRLNAEFTGQPIERIEADSDRDRWFTASEALEYGFVDHIITRAHVNGEVQ.

Serine 98 acts as the Nucleophile in catalysis. Histidine 123 is an active-site residue.

It belongs to the peptidase S14 family. As to quaternary structure, fourteen ClpP subunits assemble into 2 heptameric rings which stack back to back to give a disk-like structure with a central cavity, resembling the structure of eukaryotic proteasomes.

The protein localises to the cytoplasm. It carries out the reaction Hydrolysis of proteins to small peptides in the presence of ATP and magnesium. alpha-casein is the usual test substrate. In the absence of ATP, only oligopeptides shorter than five residues are hydrolyzed (such as succinyl-Leu-Tyr-|-NHMec, and Leu-Tyr-Leu-|-Tyr-Trp, in which cleavage of the -Tyr-|-Leu- and -Tyr-|-Trp bonds also occurs).. In terms of biological role, cleaves peptides in various proteins in a process that requires ATP hydrolysis. Has a chymotrypsin-like activity. Plays a major role in the degradation of misfolded proteins. This chain is ATP-dependent Clp protease proteolytic subunit 1, found in Mycobacterium leprae (strain TN).